A 247-amino-acid chain; its full sequence is GTP cyclohydrolase 1 type 2 homolog (247 aa).

H63, H64, D101, H215, and E219 together coordinate a divalent metal cation.

It belongs to the GTP cyclohydrolase I type 2/NIF3 family. In terms of assembly, toroid-shaped homohexamer. In the hexamer, 3 dimers assemble to form a ring-like structure surrounding a central hole.

In terms of biological role, provides significant protection from radiation damage and may be involved in the degradation of radiation-damaged nucleotides. In Escherichia coli O157:H7, this protein is GTP cyclohydrolase 1 type 2 homolog (ybgI).